The following is a 187-amino-acid chain: Prepronociceptin (187 aa).

The signal sequence occupies residues 1–19; that stretch reads MKILFCDVLLLSLLSSVFS. The propeptide occupies 20–95; that stretch reads SCPRDCLTCQ…QPKASEMQHL (76 aa). A run of 3 repeats spans residues 109–114, 115–120, and 121–126. Residues 109–126 are 3 X 6 AA tandem repeats of D-A-E-P-G-A; it reads DAEPGADAEPGADAEPGA. A disordered region spans residues 109 to 133; it reads DAEPGADAEPGADAEPGADDAEEVE. Residues 112–131 show a composition bias toward acidic residues; it reads PGADAEPGADAEPGADDAEE. Positions 180-187 are excised as a propeptide; sequence TLHQNGNV.

This sequence belongs to the opioid neuropeptide precursor family. Specific enzymatic cleavages at paired basic residues probably yield other active peptides besides nociceptin. Post-translationally, the N-terminal domain contains 6 conserved cysteines thought to be involved in disulfide bonding and/or processing. In terms of tissue distribution, brain and spinal cord. Low levels in kidney and spleen.

The protein localises to the secreted. In terms of biological role, ligand of the opioid receptor-like receptor OPRL1. It may act as a transmitter in the brain by modulating nociceptive and locomotor behavior. May be involved in neuronal differentiation and development. When administered intracerebroventricularly, nociceptin induces hyperalgesia and decreases locomotor activity. Functionally, blocks nociceptin action in pain transmission by inhibiting nociceptin-induced hyperalgesia and allodynia. Has potent analgesic activity. The sequence is that of Prepronociceptin (Pnoc) from Mus musculus (Mouse).